A 461-amino-acid polypeptide reads, in one-letter code: D-phenylhydantoinase (461 aa).

Positions 59, 61, and 151 each coordinate a divalent metal cation. Lys151 is subject to N6-carboxylysine. Tyr156 is a binding site for substrate. Positions 182 and 239 each coordinate a divalent metal cation. Ser286 contributes to the substrate binding site. Asp313 is an a divalent metal cation binding site. Asn335 contacts substrate.

It belongs to the metallo-dependent hydrolases superfamily. Hydantoinase/dihydropyrimidinase family. As to quaternary structure, homotetramer. Requires a divalent metal cation as cofactor. Post-translationally, carboxylation allows a single lysine to coordinate two divalent metal cations.

The catalysed reaction is D-5-phenylhydantoin + H2O = N-carbamoyl-D-phenylglycine + H(+). Its function is as follows. Catalyzes the stereospecific hydrolysis of the cyclic amide bond of D-hydantoin derivatives with an aromatic side chains at the 5'-position. Has no activity on dihydropyrimidines. The physiological function is unknown. This is D-phenylhydantoinase from Escherichia coli (strain 55989 / EAEC).